A 532-amino-acid chain; its full sequence is Cytochrome P450 99A2 (532 aa).

A helical membrane pass occupies residues Ser30–Thr50. Cys468 serves as a coordination point for heme. The helical transmembrane segment at Phe473–Leu493 threads the bilayer.

Belongs to the cytochrome P450 family. Heme serves as cofactor.

It localises to the membrane. Involved in momilactone phytoalexins biosynthesis. Participates in the biosynthetic steps between 9-beta-pimara-7,15-diene and 3-beta-hydroxy-9-beta-pimara-7,15-dien-19,6-beta-olide. The sequence is that of Cytochrome P450 99A2 (CYP99A2) from Oryza sativa subsp. japonica (Rice).